A 745-amino-acid chain; its full sequence is Fatty acid oxidation complex subunit alpha (745 aa).

The interval 47–209 is enoyl-CoA hydratase; the sequence is VNTLKAKFAE…KMGLVDDVVP (163 aa). Residues 325–745 are 3-hydroxyacyl-CoA dehydrogenase; sequence RAIHRVGVLG…LDEAAITAHN (421 aa).

In the N-terminal section; belongs to the enoyl-CoA hydratase/isomerase family. This sequence in the central section; belongs to the 3-hydroxyacyl-CoA dehydrogenase family. As to quaternary structure, heterotetramer of two alpha chains (FadJ) and two beta chains (FadI).

It is found in the cytoplasm. It catalyses the reaction a (3S)-3-hydroxyacyl-CoA = a (2E)-enoyl-CoA + H2O. The enzyme catalyses a 4-saturated-(3S)-3-hydroxyacyl-CoA = a (3E)-enoyl-CoA + H2O. It carries out the reaction a (3S)-3-hydroxyacyl-CoA + NAD(+) = a 3-oxoacyl-CoA + NADH + H(+). The catalysed reaction is (3S)-3-hydroxybutanoyl-CoA = (3R)-3-hydroxybutanoyl-CoA. It functions in the pathway lipid metabolism; fatty acid beta-oxidation. In terms of biological role, catalyzes the formation of a hydroxyacyl-CoA by addition of water on enoyl-CoA. Also exhibits 3-hydroxyacyl-CoA epimerase and 3-hydroxyacyl-CoA dehydrogenase activities. This Yersinia enterocolitica serotype O:8 / biotype 1B (strain NCTC 13174 / 8081) protein is Fatty acid oxidation complex subunit alpha.